Reading from the N-terminus, the 291-residue chain is Gamma-sarcoglycan (291 aa).

Residues 38 to 58 form a helical; Signal-anchor for type II membrane protein membrane-spanning segment; the sequence is LFVLLLLIVLLVNFALTIWIL. Residues 59–291 are Extracellular-facing; sequence RVMWFSPVGM…TCHEHSHLCL (233 aa). Asn-110 carries an N-linked (GlcNAc...) asparagine glycan. Disulfide bonds link Cys-265–Cys-290 and Cys-267–Cys-283.

Belongs to the sarcoglycan beta/delta/gamma/zeta family. As to quaternary structure, interacts with the syntrophin SNTA1. Cross-link to form 2 major subcomplexes: one consisting of SGCB, SGCD and SGCG and the other consisting of SGCB and SGCD. The association between SGCB and SGCG is particularly strong while SGCA is loosely associated with the other sarcoglycans. Interacts with FLNC. Disulfide bonds are present.

Its subcellular location is the cell membrane. It localises to the sarcolemma. The protein localises to the cytoplasm. It is found in the cytoskeleton. In terms of biological role, component of the sarcoglycan complex, a subcomplex of the dystrophin-glycoprotein complex which forms a link between the F-actin cytoskeleton and the extracellular matrix. In Bos taurus (Bovine), this protein is Gamma-sarcoglycan (SGCG).